Reading from the N-terminus, the 574-residue chain is Urease subunit alpha (574 aa).

The Urease domain maps to 131–574 (GAIDSHIHFI…LPMAQRYLLI (444 aa)). The Ni(2+) site is built by His136, His138, and Lys219. At Lys219 the chain carries N6-carboxylysine. Residue His221 participates in substrate binding. Ni(2+)-binding residues include His248 and His274. His322 serves as the catalytic Proton donor. A Ni(2+)-binding site is contributed by Asp362.

The protein belongs to the metallo-dependent hydrolases superfamily. Urease alpha subunit family. As to quaternary structure, heterotrimer of UreA (gamma), UreB (beta) and UreC (alpha) subunits. Three heterotrimers associate to form the active enzyme. It depends on Ni cation as a cofactor. Post-translationally, carboxylation allows a single lysine to coordinate two nickel ions.

The protein resides in the cytoplasm. The catalysed reaction is urea + 2 H2O + H(+) = hydrogencarbonate + 2 NH4(+). It participates in nitrogen metabolism; urea degradation; CO(2) and NH(3) from urea (urease route): step 1/1. The sequence is that of Urease subunit alpha from Prochlorococcus marinus (strain MIT 9303).